Here is a 168-residue protein sequence, read N- to C-terminus: Putative insulin-like growth factor 2 antisense gene protein (168 aa).

2 disordered regions span residues Met-1–Asn-91 and Pro-108–Lys-168. Composition is skewed to basic residues over residues Ala-59–Ala-70 and Arg-159–Lys-168.

This chain is Putative insulin-like growth factor 2 antisense gene protein (IGF2-AS), found in Homo sapiens (Human).